The primary structure comprises 198 residues: Glycerol-3-phosphate acyltransferase (198 aa).

The next 5 membrane-spanning stretches (helical) occupy residues 2–22 (IIVIITVMVSFLCGSIPTGYL), 55–75 (MITQVMDILKGIIPVLLCMLI), 88–108 (YLSIIVIAVILGHDYTPFLGF), 118–138 (VGAFFLLAPAAVLAGAVVYFV), and 162–182 (IALRLPIEITVCAIIACGLLI).

It belongs to the PlsY family. Probably interacts with PlsX.

The protein resides in the cell membrane. It catalyses the reaction an acyl phosphate + sn-glycerol 3-phosphate = a 1-acyl-sn-glycero-3-phosphate + phosphate. It functions in the pathway lipid metabolism; phospholipid metabolism. Catalyzes the transfer of an acyl group from acyl-phosphate (acyl-PO(4)) to glycerol-3-phosphate (G3P) to form lysophosphatidic acid (LPA). This enzyme utilizes acyl-phosphate as fatty acyl donor, but not acyl-CoA or acyl-ACP. This chain is Glycerol-3-phosphate acyltransferase, found in Clostridium acetobutylicum (strain ATCC 824 / DSM 792 / JCM 1419 / IAM 19013 / LMG 5710 / NBRC 13948 / NRRL B-527 / VKM B-1787 / 2291 / W).